The chain runs to 937 residues: AP-2 complex subunit beta (937 aa).

Residue T2 is modified to N-acetylthreonine. S4 is modified (phosphoserine). K265 carries the N6-acetyllysine modification. Positions 593–617 are disordered; that stretch reads LPIHHGSTDAGDSPVGTTTTTNLEQ. Residues 607 to 617 show a composition bias toward polar residues; that stretch reads VGTTTTTNLEQ. 2 positions are modified to phosphotyrosine: Y737 and Y928.

This sequence belongs to the adaptor complexes large subunit family. In terms of assembly, adaptor protein complex 2 (AP-2) is a heterotetramer composed of two large adaptins (alpha-type subunit AP2A1 or AP2A2 and beta-type subunit AP2B1), a medium adaptin (mu-type subunit AP2M1) and a small adaptin (sigma-type subunit AP2S1). Interacts with EPN1. Interacts with EPS15; clathrin competes with EPS15. Interacts with SNAP91; clathrin competes with SNAP91. Interacts with CLTC; clathrin competes with EPS15, SNAP91 and PIP5K1C. Interacts with LDLRAP1. Interacts with AMPH and BIN1. Interacts with ARF6 (GDP-bound). Interacts (dephosphorylated at Tyr-737) with ARRB1; phosphorylation of AP2B1 at Tyr-737 disrupts the interaction. Interacts with SLC2A8. Interacts with SCYL1 and SCYL2. Interacts with TGFBR1 and TGFBR2. Interacts with PIP5K1C; clathrin competes with PIP5K1C. Interacts with DENND1B. Interacts with FCHO1. Interacts with RFTN1. Interacts with KIAA1107. Together with AP2A1 or AP2A2 and AP2M1, it interacts with ADAM10; this interaction facilitates ADAM10 endocytosis from the plasma membrane during long-term potentiation in hippocampal neurons. In terms of tissue distribution, expressed in the brain (at protein level).

It localises to the cell membrane. The protein localises to the membrane. Its subcellular location is the coated pit. Its function is as follows. Component of the adaptor protein complex 2 (AP-2). Adaptor protein complexes function in protein transport via transport vesicles in different membrane traffic pathways. Adaptor protein complexes are vesicle coat components and appear to be involved in cargo selection and vesicle formation. AP-2 is involved in clathrin-dependent endocytosis in which cargo proteins are incorporated into vesicles surrounded by clathrin (clathrin-coated vesicles, CCVs) which are destined for fusion with the early endosome. The clathrin lattice serves as a mechanical scaffold but is itself unable to bind directly to membrane components. Clathrin-associated adaptor protein (AP) complexes which can bind directly to both the clathrin lattice and to the lipid and protein components of membranes are considered to be the major clathrin adaptors contributing the CCV formation. AP-2 also serves as a cargo receptor to selectively sort the membrane proteins involved in receptor-mediated endocytosis. AP-2 seems to play a role in the recycling of synaptic vesicle membranes from the presynaptic surface. AP-2 recognizes Y-X-X-[FILMV] (Y-X-X-Phi) and [ED]-X-X-X-L-[LI] endocytosis signal motifs within the cytosolic tails of transmembrane cargo molecules. AP-2 may also play a role in maintaining normal post-endocytic trafficking through the ARF6-regulated, non-clathrin pathway. During long-term potentiation in hippocampal neurons, AP-2 is responsible for the endocytosis of ADAM10. The AP-2 beta subunit acts via its C-terminal appendage domain as a scaffolding platform for endocytic accessory proteins; at least some clathrin-associated sorting proteins (CLASPs) are recognized by their [DE]-X(1,2)-F-X-X-[FL]-X-X-X-R motif. The AP-2 beta subunit binds to clathrin heavy chain, promoting clathrin lattice assembly; clathrin displaces at least some CLASPs from AP2B1 which probably then can be positioned for further coat assembly. The chain is AP-2 complex subunit beta (Ap2b1) from Mus musculus (Mouse).